The following is an 81-amino-acid chain: Putative membrane protein insertion efficiency factor (81 aa).

Belongs to the UPF0161 family.

The protein resides in the cell inner membrane. Could be involved in insertion of integral membrane proteins into the membrane. This chain is Putative membrane protein insertion efficiency factor, found in Pseudomonas syringae pv. tomato (strain ATCC BAA-871 / DC3000).